Consider the following 174-residue polypeptide: ATP synthase subunit d, mitochondrial (174 aa).

Serine 2 is modified (N-acetylserine).

It belongs to the ATPase d subunit family. In terms of assembly, F-type ATPases have 2 components, CF(1) - the catalytic core - and CF(0) - the membrane proton channel. In yeast, the dimeric form of ATP synthase consists of 17 polypeptides: alpha, beta, gamma, delta, epsilon, 4 (B), 5 (OSCP), 6 (A), 8, 9 (C), d, E (Tim11), f, g, h, i/j and k.

The protein resides in the mitochondrion. Its subcellular location is the mitochondrion inner membrane. In terms of biological role, mitochondrial membrane ATP synthase (F(1)F(0) ATP synthase or Complex V) produces ATP from ADP in the presence of a proton gradient across the membrane which is generated by electron transport complexes of the respiratory chain. F-type ATPases consist of two structural domains, F(1) - containing the extramembraneous catalytic core, and F(0) - containing the membrane proton channel, linked together by a central stalk and a peripheral stalk. During catalysis, ATP synthesis in the catalytic domain of F(1) is coupled via a rotary mechanism of the central stalk subunits to proton translocation. Part of the complex F(0) domain and the peripheric stalk, which acts as a stator to hold the catalytic alpha(3)beta(3) subcomplex and subunit a/ATP6 static relative to the rotary elements. The protein is ATP synthase subunit d, mitochondrial (ATP7) of Saccharomyces cerevisiae (strain ATCC 204508 / S288c) (Baker's yeast).